Consider the following 339-residue polypeptide: DNA-directed RNA polymerase subunit alpha (339 aa).

The alpha N-terminal domain (alpha-NTD) stretch occupies residues Met-1–Glu-235. An alpha C-terminal domain (alpha-CTD) region spans residues Phe-251 to Tyr-339.

It belongs to the RNA polymerase alpha chain family. As to quaternary structure, homodimer. The RNAP catalytic core consists of 2 alpha, 1 beta, 1 beta' and 1 omega subunit. When a sigma factor is associated with the core the holoenzyme is formed, which can initiate transcription.

It carries out the reaction RNA(n) + a ribonucleoside 5'-triphosphate = RNA(n+1) + diphosphate. In terms of biological role, DNA-dependent RNA polymerase catalyzes the transcription of DNA into RNA using the four ribonucleoside triphosphates as substrates. The sequence is that of DNA-directed RNA polymerase subunit alpha from Rhodopseudomonas palustris (strain BisB5).